The primary structure comprises 218 residues: Adapter protein MecA (218 aa).

The protein belongs to the MecA family. Homodimer.

In terms of biological role, enables the recognition and targeting of unfolded and aggregated proteins to the ClpC protease or to other proteins involved in proteolysis. The chain is Adapter protein MecA from Exiguobacterium sp. (strain ATCC BAA-1283 / AT1b).